The chain runs to 166 residues: Phospholipase A2 inhibitor clone 10 (166 aa).

An N-terminal signal peptide occupies residues 1 to 19 (MRLILLSSLLLLGIFLANG). A C-type lectin domain is found at 46-161 (LKYSFLTVHR…CDDNLLVVCE (116 aa)). Intrachain disulfides connect C83–C160 and C138–C152. N122 is a glycosylation site (N-linked (GlcNAc...) asparagine).

This sequence belongs to the alpha-type phospholipase A2 inhibitor family. Homotrimer; non-covalently linked. As to expression, expressed by the liver.

The protein resides in the secreted. Functionally, this phospholipase A2 inhibitor binds directly phospholipase A2 in the presence or absence of calcium. This is Phospholipase A2 inhibitor clone 10 from Bothrops moojeni (Lance-headed viper).